The sequence spans 94 residues: Co-chaperonin GroES (94 aa).

This sequence belongs to the GroES chaperonin family. Heptamer of 7 subunits arranged in a ring. Interacts with the chaperonin GroEL.

Its subcellular location is the cytoplasm. Together with the chaperonin GroEL, plays an essential role in assisting protein folding. The GroEL-GroES system forms a nano-cage that allows encapsulation of the non-native substrate proteins and provides a physical environment optimized to promote and accelerate protein folding. GroES binds to the apical surface of the GroEL ring, thereby capping the opening of the GroEL channel. This chain is Co-chaperonin GroES, found in Lactobacillus acidophilus (strain ATCC 700396 / NCK56 / N2 / NCFM).